The sequence spans 1236 residues: ESX-4 secretion system protein EccC4 (1236 aa).

The next 2 membrane-spanning stretches (helical) occupy residues 32–52 (LLPVVMSVATVGVMVTVFLPG) and 59–79 (PTFLAFPMMMLVSLVVTAVTG). 3 consecutive FtsK domains span residues 407 to 607 (GTAV…SESR), 747 to 936 (RVPL…ADSE), and 1018 to 1201 (GQPV…DEGA). ATP contacts are provided by residues 430-437 (GATGSGKS), 765-772 (GAPQTGKS), and 1035-1042 (GDNECGKT).

In terms of assembly, part of the ESX-4 / type VII secretion system (T7SS), which is composed of cytosolic and membrane components.

It localises to the cell membrane. This chain is ESX-4 secretion system protein EccC4 (eccC4), found in Mycobacterium tuberculosis (strain ATCC 25618 / H37Rv).